Consider the following 882-residue polypeptide: MAEHSAPVLEIDPKYGPFDKHTPMMQQYLRLKSGHPNTLVFYRMGDFYELFFEDAEKASRLLDITLTARGSSNGHPIRMAGIPFHAAEQYLAKLVKLGESVAICEQIGDPATAKGPVERKVVRVVTPGTLTDAALLSDKINNHLLAIAHLPAKRGAAPLIGLAWLNLVGGELRVMECSPDQLDRELERIRPAEVLADDATLNTIQVDVARTRLPDWHFDVEAGTRRLREQLGVASLVAFGAETLTAALAAAGALLNYAAATQGQSLRHVIGLTVEHESEFIGLDTATRRNLELTETLRGQESPTLFSLLDTCATSMGSRLLRHWLHHPLRDRAIPQARQQAIEVLLGGDWQTLRSTLRTLSDVERITGRLALLSARPRDLSSLRDTLARLPEIREELPQSDAAPLLIELYAALTLPEDAHALLQRAVMAEPAAMVRDGGVIARGYDADLDELRDISENCGQFLVDLEARERERTGIANLRVEYNRVHGFYIEVTNGQAAKVPDDYRRRQTLKNAERYITPELKAFEDKALSAQDRALSREKLLYEELLQKLLPHLAEFKRIAAALAQADVLATLAERAHALSWSRPTLTDAPGIELTRARHPVVEQQVEQFVANDCMLQEARKLLLITGPNMGGKSTFMRQTALVVLLAYVGAFVPAEAAVIGPIDRIFTRIGAADDLAGGRSTFMVEMTEAAAILHRATPNSLVLMDEIGRGTSTFDGLALAWAIARHLLSHNRSHTLFATHYFELTQLPQEFAQAANVHLSAVEHGDGIVFLHAVQEGPASQSYGLQVAQLAGVPQPVIRAARKRLAWLEQHSADTGATPQLDLFALAADMPIVDEGDADAETPDSALADALAGIDPDDMTPREALDALYRLKALASPAA.

629-636 (GPNMGGKS) serves as a coordination point for ATP.

This sequence belongs to the DNA mismatch repair MutS family.

In terms of biological role, this protein is involved in the repair of mismatches in DNA. It is possible that it carries out the mismatch recognition step. This protein has a weak ATPase activity. This Ralstonia pickettii (strain 12J) protein is DNA mismatch repair protein MutS.